A 149-amino-acid chain; its full sequence is Calmodulin (149 aa).

Ala2 is modified (N-acetylalanine). EF-hand domains are found at residues 8-43 (EQVS…LGQN), 44-79 (PSES…KMKD), 81-116 (DSEE…IGEK), and 117-149 (LTDD…MMQK). Asp21, Asp23, Asp25, Gln27, Glu32, Asp57, Asp59, Asn61, Thr63, Glu68, Asp94, Asp96, Asn98, Glu105, Asp130, Asp132, Asp134, Arg136, and Glu141 together coordinate Ca(2+).

Belongs to the calmodulin family.

Calmodulin mediates the control of a large number of enzymes, ion channels and other proteins by Ca(2+). Among the enzymes to be stimulated by the calmodulin-Ca(2+) complex are a number of protein kinases and phosphatases. The polypeptide is Calmodulin (Colletotrichum gloeosporioides (Anthracnose fungus)).